Reading from the N-terminus, the 279-residue chain is NAD kinase (279 aa).

Asp-63 acts as the Proton acceptor in catalysis. NAD(+)-binding positions include 63–64 (DG), Arg-68, 133–134 (NE), and Asp-163.

This sequence belongs to the NAD kinase family. A divalent metal cation is required as a cofactor.

The protein localises to the cytoplasm. The enzyme catalyses NAD(+) + ATP = ADP + NADP(+) + H(+). In terms of biological role, involved in the regulation of the intracellular balance of NAD and NADP, and is a key enzyme in the biosynthesis of NADP. Catalyzes specifically the phosphorylation on 2'-hydroxyl of the adenosine moiety of NAD to yield NADP. In Protochlamydia amoebophila (strain UWE25), this protein is NAD kinase.